We begin with the raw amino-acid sequence, 154 residues long: Ubiquitin-conjugating enzyme E2 L3 (154 aa).

The UBC core domain occupies 2–149; sequence AASRRLMKEL…AEEFTKKYGE (148 aa). The Glycyl thioester intermediate role is filled by C86. K131 is subject to N6-acetyllysine.

It belongs to the ubiquitin-conjugating enzyme family. Interacts with PRKN; involved in ubiquitination and degradation of misfolded proteins. Interacts with UBE3A. Interacts with CCNB1IP1, CBL, ZAP70, RNF19A, RNF19B and RNF144B. Interacts with ARIH1. Interacts with ARIH2 (via RING-type 1). Interacts with NCOA1; they functionally interact to regulate progesterone receptor transcriptional activity. Interacts with NDFIP1 (via N-terminus); the interaction mediates recruitment of UBE2L3 to ITCH and causes MAP3K7 ubiquitination. Post-translationally, ubiquitinated. The alteration of UBE2L3 protein levels during the S-phase of the cell cycle is due to ubiquitin-dependent proteasomal degradation. Autoubiquitinated in vitro.

The protein localises to the nucleus. The protein resides in the cytoplasm. It catalyses the reaction S-ubiquitinyl-[E1 ubiquitin-activating enzyme]-L-cysteine + [E2 ubiquitin-conjugating enzyme]-L-cysteine = [E1 ubiquitin-activating enzyme]-L-cysteine + S-ubiquitinyl-[E2 ubiquitin-conjugating enzyme]-L-cysteine.. Its pathway is protein modification; protein ubiquitination. Its function is as follows. Ubiquitin-conjugating enzyme E2 that specifically acts with HECT-type and RBR family E3 ubiquitin-protein ligases. Does not function with most RING-containing E3 ubiquitin-protein ligases because it lacks intrinsic E3-independent reactivity with lysine: in contrast, it has activity with the RBR family E3 enzymes, such as PRKN, RNF31 and ARIH1, that function like RING-HECT hybrids. Accepts ubiquitin from the E1 complex and catalyzes its covalent attachment to other proteins. Mediates ubiquitination by the CUL9-RBX1 complex. In vitro catalyzes 'Lys-11'-linked polyubiquitination. Involved in the selective degradation of short-lived and abnormal proteins. Down-regulated during the S-phase it is involved in progression through the cell cycle. Regulates nuclear hormone receptors transcriptional activity. May play a role in myelopoiesis. This is Ubiquitin-conjugating enzyme E2 L3 (UBE2L3) from Bos taurus (Bovine).